The following is a 116-amino-acid chain: NADH-ubiquinone oxidoreductase chain 3 (116 aa).

3 helical membrane passes run 3–23 (LFATILIIMTTLSLVLALVSF), 56–76 (FFLVAVLFPLFDLEIALLLPL), and 88–108 (TLFWAMTVLILLTLGLAYEWA).

The protein belongs to the complex I subunit 3 family. Core subunit of respiratory chain NADH dehydrogenase (Complex I) which is composed of 45 different subunits.

The protein resides in the mitochondrion inner membrane. It carries out the reaction a ubiquinone + NADH + 5 H(+)(in) = a ubiquinol + NAD(+) + 4 H(+)(out). Functionally, core subunit of the mitochondrial membrane respiratory chain NADH dehydrogenase (Complex I) which catalyzes electron transfer from NADH through the respiratory chain, using ubiquinone as an electron acceptor. Essential for the catalytic activity of complex I. The chain is NADH-ubiquinone oxidoreductase chain 3 (mt-nd3) from Danio rerio (Zebrafish).